We begin with the raw amino-acid sequence, 302 residues long: Aurora/IPL1-related protein kinase 2 (302 aa).

The segment covering 1 to 17 (MENKPQILQTKSKNTPN) has biased composition (polar residues). The disordered stretch occupies residues 1 to 23 (MENKPQILQTKSKNTPNKGGKLS). Positions 27–277 (FEIGRPLGKG…LQEVKDHYWV (251 aa)) constitute a Protein kinase domain. Residues 33 to 41 (LGKGKFGSV) and Lys56 contribute to the ATP site. Asp150 functions as the Proton acceptor in the catalytic mechanism.

The protein belongs to the protein kinase superfamily. Ser/Thr protein kinase family. As to quaternary structure, interacts with zen-4 and icp-1. Part of a complex containing at least air-2; icp-1; csc-1 and bir-1. Interacts with tlk-1 and bmk-1.

It is found in the cytoplasm. The protein localises to the cytoskeleton. It localises to the chromosome. Its subcellular location is the midbody. It carries out the reaction L-seryl-[protein] + ATP = O-phospho-L-seryl-[protein] + ADP + H(+). It catalyses the reaction L-threonyl-[protein] + ATP = O-phospho-L-threonyl-[protein] + ADP + H(+). Functionally, serine/threonine-protein kinase which mediates both meiotic and mitotic chromosome segregation. Required for histone H3 'Ser-10' phosphorylation. Phosphorylates tlk-1 and zen-4. This is Aurora/IPL1-related protein kinase 2 (air-2) from Caenorhabditis briggsae.